A 771-amino-acid polypeptide reads, in one-letter code: U-box domain-containing protein 6 (771 aa).

The U-box domain occupies 274–348 (IPPEELRCPI…ASWCEQNGIT (75 aa)). A disordered region spans residues 394–415 (EESSTIESERQQKEKNNAPDEV). The segment covering 400–411 (ESERQQKEKNNA) has biased composition (basic and acidic residues). 5 ARM repeats span residues 456–499 (EEAR…NLAV), 502–542 (NRNK…CLEK), 544–581 (KPVIGSSQAVSFFVNLLLQDTKTQCKLDALHALYNLST), 583–622 (SPNIPTLLSSNIIKSLQVLASTGNHLWIEKSLAVLLNLAS), and 625–664 (EGKEEMITTQGMISTLATVLDTGDTVEQEQAVSCLVILCT). The span at 706 to 722 (EQRHRDQPSPNKEEAPR) shows a compositional bias: basic and acidic residues. A disordered region spans residues 706–751 (EQRHRDQPSPNKEEAPRKTVSAPMAIPAPVSAPESEVKPLTKSISR).

The catalysed reaction is S-ubiquitinyl-[E2 ubiquitin-conjugating enzyme]-L-cysteine + [acceptor protein]-L-lysine = [E2 ubiquitin-conjugating enzyme]-L-cysteine + N(6)-ubiquitinyl-[acceptor protein]-L-lysine.. It functions in the pathway protein modification; protein ubiquitination. Functionally, functions as an E3 ubiquitin ligase. The protein is U-box domain-containing protein 6 (PUB6) of Arabidopsis thaliana (Mouse-ear cress).